Reading from the N-terminus, the 487-residue chain is Protein SMG9 (487 aa).

Disordered stretches follow at residues 30–83 (EDAA…PPAL) and 136–164 (RDKG…LQPP). Residues 42–70 (LKKDRDREQETWDRERDKDRKLERDREAE) show a composition bias toward basic and acidic residues.

Belongs to the SMG9 family.

Involved in nonsense-mediated decay (NMD) of mRNAs containing premature stop codons. Probable component of kinase complex containing nonC and recruited to stalled ribosomes. The polypeptide is Protein SMG9 (Drosophila melanogaster (Fruit fly)).